A 104-amino-acid chain; its full sequence is Large ribosomal subunit protein uL24 (104 aa).

The protein belongs to the universal ribosomal protein uL24 family. In terms of assembly, part of the 50S ribosomal subunit.

Its function is as follows. One of two assembly initiator proteins, it binds directly to the 5'-end of the 23S rRNA, where it nucleates assembly of the 50S subunit. One of the proteins that surrounds the polypeptide exit tunnel on the outside of the subunit. This chain is Large ribosomal subunit protein uL24, found in Rhodopseudomonas palustris (strain BisA53).